We begin with the raw amino-acid sequence, 99 residues long: Progonadoliberin-1 (99 aa).

Positions 1–26 are cleaved as a signal peptide; that stretch reads MAAQTFALRLLLVGTLLGTLLGQGCC. Position 27 is a pyrrolidone carboxylic acid (Q27). Position 36 is a glycine amide (G36).

It belongs to the GnRH family.

It localises to the secreted. Its function is as follows. Stimulates the secretion of gonadotropins. This Dicentrarchus labrax (European seabass) protein is Progonadoliberin-1 (gnrh1).